Consider the following 103-residue polypeptide: MLKPSIDTLLDKVPSKYSLVILQAKRAHELEAGEKATQDFKSVKSTLRALEEIESGNVVIHPDPSAKRASVRARIEAERLAKEEEERKIKEQIAKEKEDGEKI.

It belongs to the RNA polymerase subunit omega family. In terms of assembly, the RNAP catalytic core consists of 2 alpha, 1 beta, 1 beta' and 1 omega subunit. When a sigma factor is associated with the core the holoenzyme is formed, which can initiate transcription.

The enzyme catalyses RNA(n) + a ribonucleoside 5'-triphosphate = RNA(n+1) + diphosphate. In terms of biological role, promotes RNA polymerase assembly. Latches the N- and C-terminal regions of the beta' subunit thereby facilitating its interaction with the beta and alpha subunits. The chain is DNA-directed RNA polymerase subunit omega from Streptococcus agalactiae serotype III (strain NEM316).